The sequence spans 563 residues: Beta-catenin-like protein 1 (563 aa).

The residue at position 1 (Met1) is an N-acetylmethionine. The interval 1 to 81 (MDVGELLSYQ…EEEEPLDESS (81 aa)) is disordered. The short motif at 16-33 (KRPRDDEEEELKTRRKQT) is the Nuclear localization signal element. Over residues 34-45 (GPRERGRYREDE) the composition is skewed to basic and acidic residues. Positions 66-78 (DGEEEEEEEEPLD) are enriched in acidic residues. 2 HEAT repeats span residues 79 to 129 (ESSV…VVAT) and 134 to 176 (YHLL…TLHE). Lys91 carries the post-translational modification N6-acetyllysine. Positions 130–140 (MPDLYHLLVEL) match the Nuclear export signal (NES) motif. 5 ARM repeats span residues 178-228 (EEGA…MAEF), 229-273 (RPEM…LQDN), 274-323 (DENR…CLML), 325-363 (SNRE…AMIG), and 364-417 (PEGA…LLRN). Ser389 bears the Phosphoserine mark. Residues 476 to 540 (DMEDEFYLRR…HIIKEYAENI (65 aa)) adopt a coiled-coil conformation. Ser545 carries the phosphoserine modification.

In terms of assembly, component of the PRP19-CDC5L splicing complex composed of a core complex comprising a homotetramer of PRPF19, CDC5L, PLRG1 and BCAS2, and at least three less stably associated proteins CTNNBL1, CWC15 and HSPA8. Interacts directly with CWC15 and CDC5L in the complex. Interacts with AICDA; the interaction is important for the antibody diversification activity of AICDA. Interacts with PRPF31 (via its NLS). Interacts (via its N-terminal NLS) with KPNA1 and KPNA2.

It is found in the nucleus. Its function is as follows. Component of the PRP19-CDC5L complex that forms an integral part of the spliceosome and is required for activating pre-mRNA splicing. Participates in AID/AICDA-mediated somatic hypermutation (SHM) and class-switch recombination (CSR), 2 processes resulting in the production of high-affinity, mutated isotype-switched antibodies. This is Beta-catenin-like protein 1 (Ctnnbl1) from Rattus norvegicus (Rat).